Here is a 351-residue protein sequence, read N- to C-terminus: Phosphate acyltransferase (351 aa).

Belongs to the PlsX family. As to quaternary structure, homodimer. Probably interacts with PlsY.

It is found in the cytoplasm. The catalysed reaction is a fatty acyl-[ACP] + phosphate = an acyl phosphate + holo-[ACP]. Its pathway is lipid metabolism; phospholipid metabolism. Its function is as follows. Catalyzes the reversible formation of acyl-phosphate (acyl-PO(4)) from acyl-[acyl-carrier-protein] (acyl-ACP). This enzyme utilizes acyl-ACP as fatty acyl donor, but not acyl-CoA. The protein is Phosphate acyltransferase of Neisseria meningitidis serogroup C / serotype 2a (strain ATCC 700532 / DSM 15464 / FAM18).